Here is a 32-residue protein sequence, read N- to C-terminus: Fibrinolytic enzyme 2 (32 aa).

Residues 1-32 form the Peptidase S8 domain; it reads ISGTSMSCPHVAGRAYVLDTSLRVYLLDTGLR. Serine 5 (charge relay system) is an active-site residue.

This sequence belongs to the peptidase S8 family.

Its activity is regulated as follows. Inhibited by PMSF. Not inhibited by benzamidine, aprotinin, SBTI, EDTA, EGTA, 2-mercaptoethanol, iodoacetic acid or pepstatin A. In terms of biological role, serine protease. Has fibrinolytic and fibrinogenolytic but no plasminogenolytic activity. Cleaves after Arg and Lys residues. Cleaves fibrinogen alpha chain, beta chain and gamma chain in that order. The protein is Fibrinolytic enzyme 2 of Hediste japonica (Polychaete worm).